Here is a 754-residue protein sequence, read N- to C-terminus: Probable TonB-dependent siderophore receptor PirA (754 aa).

The first 24 residues, 1–24 (MSKRIIQSVLSVSVLASMMSMAFA), serve as a signal peptide directing secretion. Positions 54–181 (EQVKQSLGVS…AGGVVNIITK (128 aa)) constitute a TBDR plug domain. In terms of domain architecture, TBDR beta-barrel spans 186-754 (ETHGSVEFYT…AYYASLKYSF (569 aa)). The segment covering 404–414 (VSTTQGKDSSG) has biased composition (polar residues). A disordered region spans residues 404–424 (VSTTQGKDSSGSGYGDQLAKG). Cysteine 511 and cysteine 519 form a disulfide bridge. Residues 737–754 (QTYNEPGRAYYASLKYSF) carry the TonB C-terminal box motif.

Belongs to the TonB-dependent receptor family.

It localises to the cell outer membrane. Its function is as follows. Probably involved in the initial step of iron uptake by binding iron chelating siderophores, thereby allowing extraction of iron from the environment. May bind the siderophore, ferric enterobactin, with micromolar affinity. The polypeptide is Probable TonB-dependent siderophore receptor PirA (Acinetobacter baumannii (strain ATCC 19606 / DSM 30007 / JCM 6841 / CCUG 19606 / CIP 70.34 / NBRC 109757 / NCIMB 12457 / NCTC 12156 / 81)).